The chain runs to 241 residues: Demethylmenaquinone methyltransferase (241 aa).

S-adenosyl-L-methionine contacts are provided by residues threonine 60, aspartate 81, and 106–107 (DA).

Belongs to the class I-like SAM-binding methyltransferase superfamily. MenG/UbiE family.

The catalysed reaction is a 2-demethylmenaquinol + S-adenosyl-L-methionine = a menaquinol + S-adenosyl-L-homocysteine + H(+). It participates in quinol/quinone metabolism; menaquinone biosynthesis; menaquinol from 1,4-dihydroxy-2-naphthoate: step 2/2. In terms of biological role, methyltransferase required for the conversion of demethylmenaquinol (DMKH2) to menaquinol (MKH2). The polypeptide is Demethylmenaquinone methyltransferase (Staphylococcus epidermidis (strain ATCC 35984 / DSM 28319 / BCRC 17069 / CCUG 31568 / BM 3577 / RP62A)).